Consider the following 645-residue polypeptide: 1,4-alpha-glucan branching enzyme GlgB (645 aa).

The active-site Nucleophile is aspartate 309. Catalysis depends on glutamate 352, which acts as the Proton donor. The disordered stretch occupies residues 619-645 (VKTRKGSKKQDGSKTKVRSNVTSRGKR). The span at 636 to 645 (RSNVTSRGKR) shows a compositional bias: polar residues.

The protein belongs to the glycosyl hydrolase 13 family. GlgB subfamily. As to quaternary structure, monomer.

It catalyses the reaction Transfers a segment of a (1-&gt;4)-alpha-D-glucan chain to a primary hydroxy group in a similar glucan chain.. Its pathway is glycan biosynthesis; glycogen biosynthesis. Its function is as follows. Catalyzes the formation of the alpha-1,6-glucosidic linkages in glycogen by scission of a 1,4-alpha-linked oligosaccharide from growing alpha-1,4-glucan chains and the subsequent attachment of the oligosaccharide to the alpha-1,6 position. In Bacillus cereus (strain AH187), this protein is 1,4-alpha-glucan branching enzyme GlgB.